We begin with the raw amino-acid sequence, 313 residues long: Glucan 1,3-beta-glucosidase (313 aa).

The signal sequence occupies residues 1 to 23 (MRFSTTLATAATALFFTASQVSA). The Proton donor role is filled by E124. N202 is a glycosylation site (N-linked (GlcNAc...) asparagine). Residue E233 is the Nucleophile of the active site. A glycan (N-linked (GlcNAc...) asparagine) is linked at N284.

Belongs to the glycosyl hydrolase 17 family.

The protein localises to the secreted. Its subcellular location is the cell wall. It catalyses the reaction Successive hydrolysis of beta-D-glucose units from the non-reducing ends of (1-&gt;3)-beta-D-glucans, releasing alpha-glucose.. Its function is as follows. Glucanases possibly play a role in cell expansion during growth, in cell-cell fusion during mating, and in spore release during sporulation. This enzyme may be involved in beta-glucan degradation and also function biosynthetically as a transglycosylase. This chain is Glucan 1,3-beta-glucosidase (BGL2), found in Saccharomyces cerevisiae (strain ATCC 204508 / S288c) (Baker's yeast).